Here is a 362-residue protein sequence, read N- to C-terminus: uncharacterized protein (362 aa).

3 disordered regions span residues 1-117 (MASK…GLNR), 153-172 (SSAP…GIRK), and 210-266 (RHFD…SSSN). Basic and acidic residues predominate over residues 12–23 (AKKEKEIKKEIE). Residues 51–70 (ENDDTDGDGKEEDAQKEDDI) are compositionally biased toward acidic residues. Composition is skewed to low complexity over residues 100–112 (NSPP…TRNT), 153–167 (SSAP…GSPS), and 241–265 (VPPS…TSSS).

This is an uncharacterized protein from Caenorhabditis elegans.